Reading from the N-terminus, the 962-residue chain is Activity-dependent neuroprotective protein 2a (962 aa).

The C2H2-type 1 zinc-finger motif lies at 75-98 (LCCSLCWYSSRSVPTFRSHIHRCH). A C2H2-type 2; degenerate zinc finger spans residues 108–130 (LMCPYCPFVSSPKVTEQHIQFFH). The C2H2-type 3; degenerate zinc finger occupies 165 to 188 (YTCATCGYHDSLLYVMKKHVLVNH). Residues 219 to 244 (YHCKLCKLPAETIEHLLYHILSSEKH) form a C2H2-type 4 zinc finger. A C2H2-type 5; degenerate zinc finger spans residues 527–547 (VKCLRCKILLTEQGIFQHLLH). 2 C2H2-type zinc fingers span residues 549 to 572 (LKCL…KKEH) and 650 to 673 (NACP…QTKH). The segment at 688–712 (YKCIYCFGVYTEKSTPKTISIHVQR) adopts a C2H2-type 8; degenerate zinc-finger fold. The segment at 753–781 (QGAPEFPKPKKEAVTPRNRRRNTKASKTG) is disordered. The homeobox DNA-binding region spans 795–854 (PMGMERTSFEDRKDFLSQYFHRKPYVTKTEIELLASRLWINKADVKAHFNSKLTKCLKAI).

The protein localises to the nucleus. May be involved in transcriptional regulation. Required for progression through late erythroid differentiation. May be involved in vasculogenesis. This Danio rerio (Zebrafish) protein is Activity-dependent neuroprotective protein 2a.